The following is a 360-amino-acid chain: Peptide chain release factor 1 (360 aa).

An N5-methylglutamine modification is found at Gln235. The segment at 281–310 (AERQRQDAAQAESRRLQVGSGDRSQRIRTY) is disordered.

This sequence belongs to the prokaryotic/mitochondrial release factor family. Post-translationally, methylated by PrmC. Methylation increases the termination efficiency of RF1.

Its subcellular location is the cytoplasm. Functionally, peptide chain release factor 1 directs the termination of translation in response to the peptide chain termination codons UAG and UAA. In Stenotrophomonas maltophilia (strain R551-3), this protein is Peptide chain release factor 1.